Reading from the N-terminus, the 586-residue chain is Exopolysaccharide phosphotransferase SCO6023 (586 aa).

It belongs to the stealth family.

The sequence is that of Exopolysaccharide phosphotransferase SCO6023 from Streptomyces coelicolor (strain ATCC BAA-471 / A3(2) / M145).